Reading from the N-terminus, the 1043-residue chain is Polycomb protein Pcl (1043 aa).

Disordered stretches follow at residues 1 to 34 (MMNN…SAPP), 271 to 302 (PDST…PLLA), 317 to 346 (FKTV…AAPS), and 395 to 422 (KLRK…NTSP). Low complexity predominate over residues 25–34 (PSTAVPSAPP). Pro residues predominate over residues 324–344 (PPTPPTPPSPPPPPPAPPVAA). Residues 349–404 (VTYALQEDVFIKCNDGRFYLGTIIDQTSDQYLIRFDDQSEQWCEPDKLRKLGGGSS) form the Tudor domain. Residues 399 to 412 (LGGGSSITAGGGGA) are compositionally biased toward gly residues. 2 consecutive PHD-type zinc fingers follow at residues 424–472 (GPMC…CAKP) and 512–560 (QIYC…VFCC). Basic and acidic residues predominate over residues 737–757 (AKKQAAQKADKHDELPLKPDL). 2 disordered regions span residues 737 to 819 (AKKQ…TSSL) and 931 to 985 (AKDL…PGHS). A compositionally biased stretch (basic residues) spans 783-792 (SRKRKAFRLS). Positions 793–804 (KRYDNSRNHCDL) are enriched in basic and acidic residues. A phosphoserine mark is found at Ser-805 and Ser-806. Positions 807 to 819 (DENSSSSRGTSSL) are enriched in low complexity. Residues 945–954 (THGRLLRQRP) show a composition bias toward basic residues. Low complexity predominate over residues 955–977 (QKQSPSQSRRNSTSSTATSSSSN).

The protein belongs to the Polycomblike family. Component of a form of the Esc/E(z) complex present specifically during early embryogenesis which is composed of Caf1-55, esc, E(z), Su(z)12, Pcl and HDAC1/Rpd3. This complex is distinct from the PRC1 complex, which contains many other PcG proteins like Pc, Ph, Psc, Su(z)2. The two complexes however cooperate and interact together during the first 3 hours of development to establish PcG silencing. Interacts with corto in vitro.

It localises to the nucleus. Its subcellular location is the chromosome. Functionally, polycomb group (PcG) protein. While PcG proteins are generally required to maintain the transcriptionally repressive state of homeotic genes throughout development, this protein is specifically required during the first 6 hours of embryogenesis to establish the repressed state. Component of the Esc/E(z) complex, which methylates 'Lys-9' and 'Lys-27' residues of histone H3, leading to transcriptional repression of the affected target gene. The Esc/E(z) complex is necessary but not sufficient for the repression of homeotic target genes, suggesting that the recruitment of the distinct PRC1 complex is also required. Required for the correct spatial expression of the homeotic genes of the Antennapedia and Bithorax complexes. The polypeptide is Polycomb protein Pcl (Pcl) (Drosophila melanogaster (Fruit fly)).